The sequence spans 617 residues: mRNA-decapping enzyme 1B (617 aa).

Residue A2 is modified to N-acetylalanine. Residue S147 is modified to Phosphoserine. Residue Y191 is modified to Phosphotyrosine. Disordered regions lie at residues 195 to 222 (NLIK…LDPE) and 243 to 266 (TVEP…KLPI). Positions 205-219 (SENQQQRIPQPNQTL) are enriched in polar residues. Residues 252–261 (QQQQQQQQQQ) are compositionally biased toward low complexity. Phosphoserine is present on residues S275 and S336. The interval 362–426 (TPGAANKCDP…VGHQAHGREQ (65 aa)) is disordered. A compositionally biased stretch (low complexity) spans 371 to 381 (PSTPAPASSAA). T392 is subject to Phosphothreonine. 2 positions are modified to phosphoserine: S448 and S511.

This sequence belongs to the DCP1 family. Interacts with DCP1A. In terms of assembly, (Microbial infection) Interacts with rotavirus A non-structural protein 2; this interaction probably plays a role in the sequestration of DCP1B in viral factories. Interacts with rotavirus A non-structural protein 5; this interaction probably plays a role in its sequestration in viral factories.

The protein resides in the cytoplasm. It localises to the nucleus. It carries out the reaction a 5'-end (N(7)-methyl 5'-triphosphoguanosine)-ribonucleoside in mRNA + H2O = N(7)-methyl-GDP + a 5'-end phospho-ribonucleoside in mRNA + 2 H(+). In terms of biological role, may play a role in the degradation of mRNAs, both in normal mRNA turnover and in nonsense-mediated mRNA decay. May remove the 7-methyl guanine cap structure from mRNA molecules, yielding a 5'-phosphorylated mRNA fragment and 7m-GDP. This is mRNA-decapping enzyme 1B (DCP1B) from Homo sapiens (Human).